The sequence spans 1246 residues: Myosin-1 (1246 aa).

The segment at 1-41 (MGHSRRPVGGEKKSRGFGRSKAVADVGDGRQTGGKPQVKKA) is disordered. In terms of domain architecture, Myosin motor spans 51–730 (IGVSDLTLLS…TLFALEAMRD (680 aa)). 144-151 (GESGAGKT) lines the ATP pocket. Residue serine 372 is modified to Phosphoserine. Positions 419-501 (SIGILDIYGF…PGVFAALNDA (83 aa)) are actin-binding. IQ domains lie at 734–754 (HNMA…RIEC) and 755–780 (AIRI…QGHK). In terms of domain architecture, TH1 spans 788-976 (RRRMSLLGSR…TIHTSAGEPP (189 aa)). A compositionally biased stretch (polar residues) spans 956-970 (GSSNVDTYKSSTIHT). 2 disordered regions span residues 956–1080 (GSSN…PKKP) and 1127–1246 (WTPQ…DDEW). 2 stretches are compositionally biased toward pro residues: residues 1033-1045 (APQP…PVPQ) and 1065-1078 (APPP…PAPK). One can recognise an SH3 domain in the interval 1077-1138 (PKKPMAKVLY…PQAYLEEQKA (62 aa)). Low complexity-rich tracts occupy residues 1151-1166 (TPAT…AKAK) and 1214-1228 (NSAS…LAEA). Over residues 1229–1240 (LRQRQEAMHGKQ) the composition is skewed to basic and acidic residues.

It belongs to the TRAFAC class myosin-kinesin ATPase superfamily. Myosin family. Post-translationally, phosphorylation of the TEDS site (Ser-372) is required for the polarization of the actin cytoskeleton. Phosphorylation probably activates the myosin-I ATPase activity.

The protein localises to the cytoplasm. It is found in the cytoskeleton. It localises to the actin patch. Functionally, type-I myosin implicated in the organization of the actin cytoskeleton. Required for proper actin cytoskeleton polarization. At the cell cortex, assembles in patch-like structures together with proteins from the actin-polymerizing machinery and promotes actin assembly. Functions as actin nucleation-promoting factor (NPF) for the Arp2/3 complex. Plays an important role in polarized growth, spore germination, hyphal morphogenesis, and septal wall formation. The sequence is that of Myosin-1 (myoA) from Aspergillus terreus (strain NIH 2624 / FGSC A1156).